Here is a 634-residue protein sequence, read N- to C-terminus: NRPS-independent siderophore synthetase rfs (634 aa).

NRPS-independent siderophore synthetase that catalyzes the rhizoferrin biosynthesis from citrate and diaminobutane via an ATP-dependent condensation of citrate with diaminobutane followed by the addition of a second citrate to the monocitryl-diaminobutane intermediate. Can also use as substrates the citrate and diaminobutane homologs oxaloacetic acid, diaminopropane, diaminobutane, diaminopentane, tricarballylic acid, hydroxylamine and ornithine. Forms only a mono-substituted intermediate with oxaloacetic acid and diaminopentane whereas both mono-citryl intermediates and full rhizoferrin derivatives were detected when diaminopropane, and ornithine were used as substrates. Tricarballylic acid only forms a rhizoferrin derivative, but no mono-substituted intermediate. This is NRPS-independent siderophore synthetase rfs from Rhizopus delemar (strain RA 99-880 / ATCC MYA-4621 / FGSC 9543 / NRRL 43880) (Mucormycosis agent).